A 1196-amino-acid chain; its full sequence is Contactin rig-6 (1196 aa).

Positions 1 to 19 (MMMLIRCISIFLLFGFVNA) are cleaved as a signal peptide. N-linked (GlcNAc...) asparagine glycosylation is found at Asn-100 and Asn-195. 2 consecutive Ig-like C2-type domains span residues 144–225 (PQIS…ARNS) and 232–319 (PPIL…CSLS). Cystine bridges form between Cys-169–Cys-220 and Cys-263–Cys-316. A glycan (N-linked (GlcNAc...) asparagine) is linked at Asn-343. 4 consecutive Ig-like C2-type domains span residues 355-438 (PQIF…VKLR), 441-533 (PSIL…ALLT), 539-626 (PVFP…VQLI), and 631-730 (PSIK…EFVT). The cysteines at positions 372 and 420 are disulfide-linked. The N-linked (GlcNAc...) asparagine glycan is linked to Asn-457. 2 disulfide bridges follow: Cys-462-Cys-517 and Cys-562-Cys-610. An N-linked (GlcNAc...) asparagine glycan is attached at Asn-644. A disulfide bridge links Cys-653 with Cys-718. 4 Fibronectin type-III domains span residues 736-844 (SPIA…TAPG), 849-961 (TIDN…SHGE), 963-1057 (KKVS…TKQH), and 1064-1168 (LIGK…LGSP). N-linked (GlcNAc...) asparagine glycosylation is found at Asn-895, Asn-925, Asn-945, Asn-974, Asn-979, Asn-986, Asn-1002, and Asn-1092. The chain crosses the membrane as a helical span at residues 1174–1194 (TTGSSDVPIPSLLLLLLLLLW). Residue Ser-1177 is the site of GPI-anchor amidated serine attachment. A propeptide spans 1178–1196 (SDVPIPSLLLLLLLLLWRL) (removed in mature form).

It belongs to the immunoglobulin superfamily. Contactin family. In terms of assembly, interacts with sax-7; the interaction establishes synaptic connections between neurons. As to expression, expressed in neurons including the I1 and I3 pharyngeal interneurons, NSM and VNC motor neurons, HSN and CAN neurons, the ALM and PLM touch receptor neurons and other unidentified head neurons. Expressed in AVG interneurons. Also expressed in somatic muscles, the excretory canal, the excretory cell and the hypodermis.

Its subcellular location is the cell membrane. The protein resides in the perikaryon. The protein localises to the cell projection. It is found in the axon. It localises to the synapse. Its subcellular location is the cytoplasm. Probable cell adhesion protein involved in patterning of the nervous system, playing a role in ALM and PLM touch receptor axon growth and VNC axon navigation. By associating with the transmembrane protein sax-7, mediates axonal interactions to establish synaptic connections between the AVG interneuron and the two PHC sensory neurons. Also required for non-neuronal cell migration in the excretory canal, regulating excretory canal elongation and excretory cell morphogenesis. Plays a role in regulating male mating behavior. This chain is Contactin rig-6, found in Caenorhabditis elegans.